Consider the following 60-residue polypeptide: Large ribosomal subunit protein bL32 (60 aa).

The tract at residues 1 to 60 is disordered; the sequence is MAVQQNKKSPSKRGMHRSHDALTNPPLAIEPTTGETHLRHHISPNGFYRGKKVIKTKNDD. Over residues 49–60 the composition is skewed to basic residues; sequence RGKKVIKTKNDD.

Belongs to the bacterial ribosomal protein bL32 family.

The polypeptide is Large ribosomal subunit protein bL32 (Nitrosomonas eutropha (strain DSM 101675 / C91 / Nm57)).